Reading from the N-terminus, the 79-residue chain is UPF0180 protein Bcer98_1118 (79 aa).

Belongs to the UPF0180 family.

The chain is UPF0180 protein Bcer98_1118 from Bacillus cytotoxicus (strain DSM 22905 / CIP 110041 / 391-98 / NVH 391-98).